Here is a 170-residue protein sequence, read N- to C-terminus: Adenine phosphoribosyltransferase (170 aa).

This sequence belongs to the purine/pyrimidine phosphoribosyltransferase family. Homodimer.

The protein resides in the cytoplasm. The catalysed reaction is AMP + diphosphate = 5-phospho-alpha-D-ribose 1-diphosphate + adenine. The protein operates within purine metabolism; AMP biosynthesis via salvage pathway; AMP from adenine: step 1/1. Its function is as follows. Catalyzes a salvage reaction resulting in the formation of AMP, that is energically less costly than de novo synthesis. In Maridesulfovibrio salexigens (strain ATCC 14822 / DSM 2638 / NCIMB 8403 / VKM B-1763) (Desulfovibrio salexigens), this protein is Adenine phosphoribosyltransferase.